A 339-amino-acid chain; its full sequence is Protein FAM76B (339 aa).

Ala2 is subject to N-acetylalanine. Residues Ser22 and Ser148 each carry the phosphoserine modification. The segment at 144-243 is disordered; it reads EQRKSLGSSH…INQSADSGGT (100 aa). Residues 148-160 are compositionally biased toward low complexity; the sequence is SLGSSHSNSSSSS. Residues 167 to 189 show a composition bias toward basic residues; sequence HHSKHHHHHHHHHHRHSSGHHKV. Phosphoserine is present on Ser193. Thr215 is modified (phosphothreonine). Residues 215–224 show a composition bias toward basic and acidic residues; sequence TPKKKPKLES. Over residues 228 to 243 the composition is skewed to polar residues; that stretch reads NGDSSSINQSADSGGT. Residues 248–328 adopt a coiled-coil conformation; it reads LISQLKEEVM…QVAALSKGKK (81 aa).

Belongs to the FAM76 family. In terms of assembly, interacts with HNRNPA2B1 (via C-terminus); the interaction results in retention of HNRNPA2B1 in the nucleus and inhibition of the NF-kappa-B-mediated inflammatory pathway.

The protein resides in the nucleus speckle. Functionally, negatively regulates the NF-kappa-B-mediated inflammatory pathway by preventing the translocation of HNRNPA2B1 from the nucleus to the cytoplasm. Inhibits the PI3K/Akt/NF-kappa-B pathway-mediated polarization of M1 macrophages by binding to and stabilizing PIK3CD mRNA, resulting in increased levels of PIK3CD protein and increased levels of phosphorylated downstream target AKT which leads to decreased NF-kappa-B signaling. The polypeptide is Protein FAM76B (Fam76b) (Mus musculus (Mouse)).